Reading from the N-terminus, the 251-residue chain is Protein unc-119 homolog B (251 aa).

A disordered region spans residues 1–28; it reads MSGSNPKAAAAASAAGPGGLVAGKEEKK. N-acetylserine is present on Ser2. Residue Lys24 is modified to N6-acetyllysine. Tyr142 serves as a coordination point for tetradecanoate.

It belongs to the PDE6D/unc-119 family. In terms of assembly, found in a complex with ARL3, RP2 and UNC119B; RP2 induces hydrolysis of GTP ARL3 in the complex, leading to the release of UNC119B. Interacts with NPHP3 (when myristoylated). Interacts with CYS1 (when myristoylated). Interacts with MACIR; interaction only takes place when UNC119B is not liganded with myristoylated proteins.

The protein localises to the cell projection. It is found in the cilium. Its function is as follows. Myristoyl-binding protein that acts as a cargo adapter: specifically binds the myristoyl moiety of a subset of N-terminally myristoylated proteins and is required for their localization. Binds myristoylated NPHP3 and plays a key role in localization of NPHP3 to the primary cilium membrane. Does not bind all myristoylated proteins. Probably plays a role in trafficking proteins in photoreceptor cells. The protein is Protein unc-119 homolog B (UNC119B) of Homo sapiens (Human).